We begin with the raw amino-acid sequence, 283 residues long: Elongation factor Ts (283 aa).

The involved in Mg(2+) ion dislocation from EF-Tu stretch occupies residues 80 to 83 (TDFV).

The protein belongs to the EF-Ts family.

The protein localises to the cytoplasm. In terms of biological role, associates with the EF-Tu.GDP complex and induces the exchange of GDP to GTP. It remains bound to the aminoacyl-tRNA.EF-Tu.GTP complex up to the GTP hydrolysis stage on the ribosome. This chain is Elongation factor Ts, found in Klebsiella pneumoniae (strain 342).